The following is a 351-amino-acid chain: Prostaglandin reductase 2 (351 aa).

Substrate is bound at residue 99-100 (FY). Residues 165-168 (GACG), lysine 192, tyrosine 208, asparagine 231, 253-259 (CGQISQY), 287-289 (FLV), and asparagine 337 contribute to the NADP(+) site. 288-290 (LVL) provides a ligand contact to substrate.

Belongs to the NADP-dependent oxidoreductase L4BD family. In terms of assembly, monomer.

The protein localises to the cytoplasm. The enzyme catalyses 13,14-dihydro-15-oxo-prostaglandin E2 + NAD(+) = 15-oxoprostaglandin E2 + NADH + H(+). It catalyses the reaction 13,14-dihydro-15-oxo-prostaglandin E2 + NADP(+) = 15-oxoprostaglandin E2 + NADPH + H(+). It carries out the reaction 13,14-dihydro-15-oxo-PGF2alpha + NADP(+) = 15-oxoprostaglandin F2alpha + NADPH + H(+). The catalysed reaction is 13,14-dihydro-15-oxo-prostaglandin E1 + NADP(+) = 15-oxoprostaglandin E1 + NADPH + H(+). The enzyme catalyses 13,14-dihydro-15-oxo-prostaglandin F1alpha + NADP(+) = 15-oxoprostaglandin F1alpha + NADPH + H(+). Functionally, functions as 15-oxo-prostaglandin 13-reductase and acts on 15-keto-PGE1, 15-keto-PGE2, 15-keto-PGE1-alpha and 15-keto-PGE2-alpha with highest activity towards 15-keto-PGE2. Overexpression represses transcriptional activity of PPARG and inhibits adipocyte differentiation. The chain is Prostaglandin reductase 2 (PTGR2) from Bos taurus (Bovine).